Here is a 121-residue protein sequence, read N- to C-terminus: Large ribosomal subunit protein uL18 (121 aa).

It belongs to the universal ribosomal protein uL18 family. Part of the 50S ribosomal subunit; part of the 5S rRNA/L5/L18/L25 subcomplex. Contacts the 5S and 23S rRNAs.

Its function is as follows. This is one of the proteins that bind and probably mediate the attachment of the 5S RNA into the large ribosomal subunit, where it forms part of the central protuberance. The protein is Large ribosomal subunit protein uL18 of Delftia acidovorans (strain DSM 14801 / SPH-1).